Reading from the N-terminus, the 312-residue chain is Protoheme IX farnesyltransferase (312 aa).

Transmembrane regions (helical) follow at residues valine 33 to asparagine 53, proline 54 to leucine 74, phenylalanine 105 to tryptophan 125, phenylalanine 126 to leucine 146, isoleucine 154 to glycine 174, phenylalanine 181 to phenylalanine 201, isoleucine 243 to isoleucine 263, and phenylalanine 291 to isoleucine 311.

It belongs to the UbiA prenyltransferase family. Protoheme IX farnesyltransferase subfamily.

It is found in the cell inner membrane. The enzyme catalyses heme b + (2E,6E)-farnesyl diphosphate + H2O = Fe(II)-heme o + diphosphate. It participates in porphyrin-containing compound metabolism; heme O biosynthesis; heme O from protoheme: step 1/1. Its function is as follows. Converts heme B (protoheme IX) to heme O by substitution of the vinyl group on carbon 2 of heme B porphyrin ring with a hydroxyethyl farnesyl side group. This Bartonella henselae (strain ATCC 49882 / DSM 28221 / CCUG 30454 / Houston 1) (Rochalimaea henselae) protein is Protoheme IX farnesyltransferase.